We begin with the raw amino-acid sequence, 496 residues long: N-succinylglutamate 5-semialdehyde dehydrogenase (496 aa).

229-234 contacts NAD(+); that stretch reads GSYATG. Residues Glu-252 and Cys-286 contribute to the active site.

This sequence belongs to the aldehyde dehydrogenase family. AstD subfamily.

It catalyses the reaction N-succinyl-L-glutamate 5-semialdehyde + NAD(+) + H2O = N-succinyl-L-glutamate + NADH + 2 H(+). It participates in amino-acid degradation; L-arginine degradation via AST pathway; L-glutamate and succinate from L-arginine: step 4/5. In terms of biological role, catalyzes the NAD-dependent reduction of succinylglutamate semialdehyde into succinylglutamate. In Legionella pneumophila subsp. pneumophila (strain Philadelphia 1 / ATCC 33152 / DSM 7513), this protein is N-succinylglutamate 5-semialdehyde dehydrogenase.